The sequence spans 531 residues: tRNA-2-methylthio-N(6)-dimethylallyladenosine synthase (531 aa).

The interval 1-26 (MNEKQRLEQTGQIKTESHPADRKSAL) is disordered. A compositionally biased stretch (basic and acidic residues) spans 15–26 (TESHPADRKSAL). The MTTase N-terminal domain maps to 80-198 (RKFYIRTYGC…LPYILHEAYM (119 aa)). Residues C89, C125, C159, C235, C239, and C242 each contribute to the [4Fe-4S] cluster site. The Radical SAM core domain maps to 221-451 (RKGKIKAWVN…NDLVQEIAAK (231 aa)). Positions 454–517 (KQYEGQVVEV…TWTLTGELVN (64 aa)) constitute a TRAM domain.

It belongs to the methylthiotransferase family. MiaB subfamily. In terms of assembly, monomer. Requires [4Fe-4S] cluster as cofactor.

It localises to the cytoplasm. It catalyses the reaction N(6)-dimethylallyladenosine(37) in tRNA + (sulfur carrier)-SH + AH2 + 2 S-adenosyl-L-methionine = 2-methylsulfanyl-N(6)-dimethylallyladenosine(37) in tRNA + (sulfur carrier)-H + 5'-deoxyadenosine + L-methionine + A + S-adenosyl-L-homocysteine + 2 H(+). In terms of biological role, catalyzes the methylthiolation of N6-(dimethylallyl)adenosine (i(6)A), leading to the formation of 2-methylthio-N6-(dimethylallyl)adenosine (ms(2)i(6)A) at position 37 in tRNAs that read codons beginning with uridine. In Geobacillus kaustophilus (strain HTA426), this protein is tRNA-2-methylthio-N(6)-dimethylallyladenosine synthase.